The sequence spans 163 residues: Putative pre-16S rRNA nuclease (163 aa).

The protein belongs to the YqgF nuclease family.

Its subcellular location is the cytoplasm. Functionally, could be a nuclease involved in processing of the 5'-end of pre-16S rRNA. The protein is Putative pre-16S rRNA nuclease of Rhodopseudomonas palustris (strain BisB18).